The chain runs to 445 residues: Phosphatidate cytidylyltransferase 2 (445 aa).

A compositionally biased stretch (basic and acidic residues) spans 1-39; it reads MTELRQRVAREPEAPPEDKESESEAKADGETASDSESRV. The tract at residues 1-52 is disordered; it reads MTELRQRVAREPEAPPEDKESESEAKADGETASDSESRVEAVTQPPSADDTP. Serine 21 bears the Phosphoserine mark. At threonine 31 the chain carries Phosphothreonine. Serine 33, serine 35, and serine 37 each carry phosphoserine. Residue threonine 51 is modified to Phosphothreonine. The next 6 membrane-spanning stretches (helical) occupy residues 79 to 99, 132 to 152, 166 to 186, 213 to 233, 262 to 282, and 340 to 360; these read MIAFFFIIIYLGPMVLMMIVM, FLLCVNYFFYGETVTDYFFTL, HRFISFTLYLTGFCMFVLSLV, LVIHNLFEGMIWFIVPISCVI, GFIGGFFATVVFGLLLSYVMS, and IALSTFASLIGPFGGFFASGF.

It belongs to the CDS family. Homodimer.

It localises to the endoplasmic reticulum membrane. The catalysed reaction is a 1,2-diacyl-sn-glycero-3-phosphate + CTP + H(+) = a CDP-1,2-diacyl-sn-glycerol + diphosphate. It catalyses the reaction 1-octadecanoyl-2-(5Z,8Z,11Z,14Z-eicosatetraenoyl)-sn-glycero-3-phosphate + CTP + H(+) = 1-octadecanoyl-2-(5Z,8Z,11Z,14Z-eicosatetraenoyl)-sn-glycero-3-cytidine-5'-diphosphate + diphosphate. It carries out the reaction 1-octadecanoyl-2-(9Z,12Z-octadecadienoyl)-sn-glycero-3-phosphate + CTP + H(+) = 1-octadecanoyl-2-(9Z,12Z-octadecadienoyl)-sn-glycero-3-cytidine-5'-diphosphate + diphosphate. The enzyme catalyses 1-hexadecanoyl-2-(5Z,8Z,11Z,14Z-eicosatetraenoyl)-sn-glycero-3-phosphate + CTP + H(+) = 1-hexadecanoyl-2-(5Z,8Z,11Z,14Z-eicosatetraenoyl)-sn-glycero-3-cytidine-5'-diphosphate + diphosphate. The catalysed reaction is 1,2-di-(5Z,8Z,11Z,14Z)-eicosatetraenoyl-sn-glycero-3-phosphate + CTP + H(+) = 1,2-di-(5Z,8Z,11Z,14Z-eicosatetraenoyl)-sn-glycero-3-cytidine-5'-diphosphate + diphosphate. It catalyses the reaction 1-octadecanoyl-2-(9Z-octadecenoyl)-sn-glycero-3-phosphate + CTP + H(+) = 1-octadecanoyl-2-(9Z-octadecenoyl)-sn-glycero-3-cytidine-5'-diphosphate + diphosphate. It carries out the reaction 1-octadecanoyl-2-(4Z,7Z,10Z,13Z,16Z,19Z-docosahexaenoyl)-sn-glycero-3-phosphate + CTP + H(+) = 1-octadecanoyl-2-(4Z,7Z,10Z,13Z,16Z,19Z-docosahexaenoyl)-sn-glycero-3-cytidine-5'-diphosphate + diphosphate. The enzyme catalyses 1,2-di-(9Z,12Z-octadecadienoyl)-sn-glycero-3-phosphate + CTP + H(+) = 1,2-di-(9Z,12Z-octadecadienoyl)-sn-glycero-3-cytidine-5'-diphosphate + diphosphate. The catalysed reaction is 1,2-di-(9Z-octadecenoyl)-sn-glycero-3-phosphate + CTP + H(+) = 1,2-di-(9Z-octadecenoyl)-sn-glycero-3-cytidine-5'-diphosphate + diphosphate. It participates in phospholipid metabolism; CDP-diacylglycerol biosynthesis; CDP-diacylglycerol from sn-glycerol 3-phosphate: step 3/3. Catalyzes the conversion of phosphatidic acid (PA) to CDP-diacylglycerol (CDP-DAG), an essential intermediate in the synthesis of phosphatidylglycerol, cardiolipin and phosphatidylinositol. Exhibits specificity for the nature of the acyl chains at the sn-1 and sn-2 positions in the substrate, PA and the preferred acyl chain composition is 1-stearoyl-2-arachidonoyl-sn-phosphatidic acid. Plays an important role in regulating the growth and maturation of lipid droplets which are storage organelles at the center of lipid and energy homeostasis. The chain is Phosphatidate cytidylyltransferase 2 (CDS2) from Bos taurus (Bovine).